Reading from the N-terminus, the 315-residue chain is Ribose-phosphate pyrophosphokinase (315 aa).

ATP-binding positions include 37-39 and 96-97; these read DSE and RQ. Positions 131 and 170 each coordinate Mg(2+). The active site involves K194. D-ribose 5-phosphate contacts are provided by residues R196, D220, and 224–228; that span reads DTGGT.

The protein belongs to the ribose-phosphate pyrophosphokinase family. Class I subfamily. Homohexamer. The cofactor is Mg(2+).

Its subcellular location is the cytoplasm. The enzyme catalyses D-ribose 5-phosphate + ATP = 5-phospho-alpha-D-ribose 1-diphosphate + AMP + H(+). It participates in metabolic intermediate biosynthesis; 5-phospho-alpha-D-ribose 1-diphosphate biosynthesis; 5-phospho-alpha-D-ribose 1-diphosphate from D-ribose 5-phosphate (route I): step 1/1. Its function is as follows. Involved in the biosynthesis of the central metabolite phospho-alpha-D-ribosyl-1-pyrophosphate (PRPP) via the transfer of pyrophosphoryl group from ATP to 1-hydroxyl of ribose-5-phosphate (Rib-5-P). This chain is Ribose-phosphate pyrophosphokinase, found in Marinomonas sp. (strain MWYL1).